The chain runs to 152 residues: MGREVEPIFDLVLLWFLLVPLVVYALLLLLLFFTTPYLIVEAIPFCYGIALMMISLFMSGMFPQAWNVWVIFGRFVLVLVVLMLSFFVINKLTNLVLLRSRYAMVVAQGLVHTGKVKQQSQQAMSDIKTKWDKEKSKTVVVTIKKKRVKSSD.

The next 3 membrane-spanning stretches (helical) occupy residues 13-33 (LLWF…LLFF), 38-58 (LIVE…SLFM), and 69-89 (WVIF…FFVI).

The protein resides in the cell membrane. This is an uncharacterized protein from Mycoplasma pneumoniae (strain ATCC 29342 / M129 / Subtype 1) (Mycoplasmoides pneumoniae).